A 218-amino-acid polypeptide reads, in one-letter code: Transmembrane gamma-carboxyglutamic acid protein 1 (218 aa).

Residues 1–20 (MGRIFLTGEKANSVLKRYPR) constitute a propeptide that is removed on maturation. A Gla domain is found at 20-66 (RANGLFEEIRQGNIERECKEEVCTFEEAREAFENNEKTKEFWNTYTK). At 21-80 (ANGLFEEIRQGNIERECKEEVCTFEEAREAFENNEKTKEFWNTYTKAQQGESNRGSDWFQ) the chain is on the extracellular side. Residues Cys-37 and Cys-42 are joined by a disulfide bond. A helical transmembrane segment spans residues 81–101 (FYLTFPLIFGLFIILLVIFLI). The Cytoplasmic portion of the chain corresponds to 102 to 218 (WRCFLRNKTR…AMVPVATTIK (117 aa)). A disordered region spans residues 160–192 (STRLSNCDPPPTYEEATGQMNLRRSETEPHLDP). A compositionally biased stretch (basic and acidic residues) spans 182 to 192 (RRSETEPHLDP).

In terms of processing, gla residues are produced after subsequent post-translational modifications of glutamate by a vitamin K-dependent gamma-carboxylase.

It localises to the membrane. The polypeptide is Transmembrane gamma-carboxyglutamic acid protein 1 (PRRG1) (Bos taurus (Bovine)).